Reading from the N-terminus, the 1186-residue chain is Sericin 1 (1186 aa).

A signal peptide spans Met1–Gly21. Polar residues-rich tracts occupy residues Ala39–Asn48 and Asn104–Asp115. Disordered regions lie at residues Ala39–Arg119, Ala131–Ser494, and Gly518–Leu1157. The span at Ala145–Ala155 shows a compositional bias: low complexity. The segment covering Ser180–Arg198 has biased composition (basic and acidic residues). The span at Ser211–Ser224 shows a compositional bias: low complexity. Residues Tyr256–Ser275 are compositionally biased toward polar residues. The span at Ala286–Ser299 shows a compositional bias: basic and acidic residues. The span at Ser300 to Ser312 shows a compositional bias: low complexity. Residues Ser321–Ser334 show a composition bias toward basic and acidic residues. Polar residues-rich tracts occupy residues Arg356–Lys380, Ala393–Tyr409, and Phe416–Glu445. 6 stretches are compositionally biased toward low complexity: residues Ala465–Glu491, Gly518–Ala537, Ser553–Ser698, Arg705–Ser1004, Ser1015–Glu1075, and Ser1097–Ser1145. A run of 11 repeats spans residues Ser593–Val630, Ser631–Val668, Ser669–Val706, Ser707–Val744, Ser745–Val782, Ser783–Val820, Ser821–Val858, Ser859–Val896, Ser897–Val934, Ser935–Val972, and Ser973–Val1010. Basic residues predominate over residues Arg1148–Leu1157.

As to expression, produced exclusively in the middle (MSG) section of silk glands.

The protein localises to the secreted. Functionally, provides the silk fibroin thread with a sticky coating. Acts as a cement by sticking silk threads together. This chain is Sericin 1 (ser1), found in Bombyx mori (Silk moth).